The following is a 103-amino-acid chain: Large ribosomal subunit protein uL24 (103 aa).

This sequence belongs to the universal ribosomal protein uL24 family. Part of the 50S ribosomal subunit.

Its function is as follows. One of two assembly initiator proteins, it binds directly to the 5'-end of the 23S rRNA, where it nucleates assembly of the 50S subunit. One of the proteins that surrounds the polypeptide exit tunnel on the outside of the subunit. The polypeptide is Large ribosomal subunit protein uL24 (Bacillus licheniformis (strain ATCC 14580 / DSM 13 / JCM 2505 / CCUG 7422 / NBRC 12200 / NCIMB 9375 / NCTC 10341 / NRRL NRS-1264 / Gibson 46)).